Here is a 263-residue protein sequence, read N- to C-terminus: MEYLKRLALLISVIILTIFIMGCDSQSDTAENPKEGSKEAQIKKSFSKTLDMYPIKNLEDFYGKEGYRDGEFKKDDKGTWLIRSEIVKQPKGKVMKTRGMQLYINRNTETAKGFFVLKEISENNNRVNKDKEEKYEVKMVGNKIIPTEQINDEKIKKEIENFKFFVQYGNFKNFEKYNNGEFSYNPEAPIYSAKYQLHNDDYNVRQLRKRYDISTKETPKLLLKGGGDLKNSSVGQNDIEFTFVERKGENIYFNDSVEFIPSK.

A signal peptide spans 1 to 22 (MEYLKRLALLISVIILTIFIMG). Cys-23 carries the N-palmitoyl cysteine lipid modification. A lipid anchor (S-diacylglycerol cysteine) is attached at Cys-23.

This sequence belongs to the staphylococcal tandem lipoprotein family.

Its subcellular location is the cell membrane. This is an uncharacterized protein from Staphylococcus aureus (strain USA300).